Reading from the N-terminus, the 534-residue chain is Glucans biosynthesis protein D (534 aa).

Residues 1 to 26 constitute a signal peptide (tat-type signal); sequence MQRRDFIRNASLALAAFGLPSLPACA.

Belongs to the OpgD/OpgG family. Predicted to be exported by the Tat system. The position of the signal peptide cleavage has not been experimentally proven.

It is found in the periplasm. It participates in glycan metabolism; osmoregulated periplasmic glucan (OPG) biosynthesis. Functionally, probably involved in the control of the structural glucose backbone of osmoregulated periplasmic glucans (OPGs). The sequence is that of Glucans biosynthesis protein D from Stenotrophomonas maltophilia (strain R551-3).